The primary structure comprises 196 residues: Nucleoside triphosphate pyrophosphatase (196 aa).

The active-site Proton acceptor is the Asp-73.

The protein belongs to the Maf family. A divalent metal cation serves as cofactor.

Its subcellular location is the cytoplasm. It carries out the reaction a ribonucleoside 5'-triphosphate + H2O = a ribonucleoside 5'-phosphate + diphosphate + H(+). The enzyme catalyses a 2'-deoxyribonucleoside 5'-triphosphate + H2O = a 2'-deoxyribonucleoside 5'-phosphate + diphosphate + H(+). Nucleoside triphosphate pyrophosphatase. May have a dual role in cell division arrest and in preventing the incorporation of modified nucleotides into cellular nucleic acids. The polypeptide is Nucleoside triphosphate pyrophosphatase (Anaplasma marginale (strain St. Maries)).